The following is a 542-amino-acid chain: Probable cysteine proteinase 361L (542 aa).

Residues cysteine 172, histidine 382, and asparagine 414 contribute to the active site. The helical transmembrane segment at 520–540 (TNNWYIYALIIIFILIIFFVL) threads the bilayer.

The protein belongs to the peptidase C1 family.

The protein localises to the membrane. Its function is as follows. Probable cysteine protease. The chain is Probable cysteine proteinase 361L from Acheta domesticus (House cricket).